A 239-amino-acid chain; its full sequence is Putative ABC transporter ATP-binding protein BR1368/BS1330_I1363 (239 aa).

Residues 5 to 234 (LSLDRVSVSR…EQVHLHYVEA (230 aa)) form the ABC transporter domain. 37–44 (GDNGVGKT) lines the ATP pocket.

The protein belongs to the ABC transporter superfamily.

The protein resides in the cell inner membrane. Its function is as follows. Probably part of an ABC transporter complex. Responsible for energy coupling to the transport system. In Brucella suis biovar 1 (strain 1330), this protein is Putative ABC transporter ATP-binding protein BR1368/BS1330_I1363.